A 180-amino-acid chain; its full sequence is uncharacterized protein (180 aa).

The tract at residues 1-31 is disordered; that stretch reads MSTYEEEHGIQQNSRDYQEVGGTSQEEQRRQ. S2 carries the N-acetylserine modification. The RING-type zinc finger occupies 109 to 153; the sequence is CSICYTNYLEDEYPLVVELPHCHHKFDLECLSVWLSRSTTCPLCR.

This is an uncharacterized protein from Saccharomyces cerevisiae (strain ATCC 204508 / S288c) (Baker's yeast).